A 157-amino-acid chain; its full sequence is Large ribosomal subunit protein uL10 (157 aa).

This sequence belongs to the universal ribosomal protein uL10 family. In terms of assembly, part of the ribosomal stalk of the 50S ribosomal subunit. The N-terminus interacts with L11 and the large rRNA to form the base of the stalk. The C-terminus forms an elongated spine to which L12 dimers bind in a sequential fashion forming a multimeric L10(L12)X complex.

Its function is as follows. Forms part of the ribosomal stalk, playing a central role in the interaction of the ribosome with GTP-bound translation factors. The polypeptide is Large ribosomal subunit protein uL10 (Campylobacter hominis (strain ATCC BAA-381 / DSM 21671 / CCUG 45161 / LMG 19568 / NCTC 13146 / CH001A)).